The sequence spans 64 residues: Prokaryotic ubiquitin-like protein Pup (64 aa).

Residues 1–11 (MAQEQTKRGGG) show a composition bias toward basic and acidic residues. A disordered region spans residues 1-37 (MAQEQTKRGGGGDDEDDFASSTAAGQERREKLAEDTD). The tract at residues 21 to 58 (STAAGQERREKLAEDTDDLLDEIDDVLEENAEDFVRAY) is ARC ATPase binding. A coiled-coil region spans residues 24–52 (AGQERREKLAEDTDDLLDEIDDVLEENAE). Q64 carries the post-translational modification Deamidated glutamine. Q64 participates in a covalent cross-link: Isoglutamyl lysine isopeptide (Gln-Lys) (interchain with K-? in acceptor proteins).

It belongs to the prokaryotic ubiquitin-like protein family. Strongly interacts with the proteasome-associated ATPase ARC through a hydrophobic interface; the interacting region of Pup lies in its C-terminal half. There is one Pup binding site per ARC hexamer ring. Post-translationally, is modified by deamidation of its C-terminal glutamine to glutamate by the deamidase Dop, a prerequisite to the subsequent pupylation process.

It participates in protein degradation; proteasomal Pup-dependent pathway. Functionally, protein modifier that is covalently attached to lysine residues of substrate proteins, thereby targeting them for proteasomal degradation. The tagging system is termed pupylation. This is Prokaryotic ubiquitin-like protein Pup from Mycolicibacterium paratuberculosis (strain ATCC BAA-968 / K-10) (Mycobacterium paratuberculosis).